A 530-amino-acid polypeptide reads, in one-letter code: Pancreatic secretory granule membrane major glycoprotein GP2 (530 aa).

The signal sequence occupies residues 1–21 (MVACDLLWLAAASCLLTLVFP). N-linked (GlcNAc...) asparagine glycosylation occurs at asparagine 33. Cystine bridges form between cysteine 41/cysteine 52, cysteine 56/cysteine 150, cysteine 78/cysteine 168, cysteine 100/cysteine 138, cysteine 106/cysteine 173, cysteine 131/cysteine 139, cysteine 183/cysteine 193, cysteine 187/cysteine 202, cysteine 204/cysteine 234, cysteine 222/cysteine 313, and cysteine 254/cysteine 277. Residues 54-74 (DPCQNHTVLNDPSRSTENTVS) form a D10C region. N-linked (GlcNAc...) asparagine glycosylation is found at asparagine 58 and asparagine 127. The 45-residue stretch at 179-223 (APKKCEIACRPEEECVFQNNSWTCVCRQDLNVSDTLSLQPLLDCG) folds into the EGF-like domain. N-linked (GlcNAc...) asparagine glycans are attached at residues asparagine 197 and asparagine 209. The ZP-N stretch occupies residues 221-314 (DCGANEIKVK…FLVNVNFQCA (94 aa)). A ZP domain is found at 221 to 477 (DCGANEIKVK…PSCSTSRLRS (257 aa)). N-linked (GlcNAc...) asparagine glycosylation is found at asparagine 284 and asparagine 320. The flexible ZP-N/ZP-C linker stretch occupies residues 315–338 (YPLDMNVSLQTALQPIVSSLNVDV). The tract at residues 339 to 350 (GGAGEFTVTMAL) is internal hydrophobic patch (IHP). The ZP-C stretch occupies residues 339–477 (GGAGEFTVTM…PSCSTSRLRS (139 aa)). Intrachain disulfides connect cysteine 394–cysteine 454, cysteine 415–cysteine 470, and cysteine 459–cysteine 466. The segment at 484-492 (LTRVLDIGP) is external hydrophobic patch (EHP). Asparagine 505 carries the GPI-anchor amidated asparagine lipid modification. Positions 506–530 (GTPRNTGFLLAWPTFFLPVFLAWLF) are cleaved as a propeptide — removed in mature form.

Interacts with SYCN. Interacts with bacterial adhesin fimH. Post-translationally, N-glycosylated. In terms of tissue distribution, expressed in pancreas.

The protein localises to the zymogen granule membrane. It localises to the secreted. The protein resides in the cell membrane. Its subcellular location is the apical cell membrane. It is found in the membrane raft. The protein localises to the endosome. Its function is as follows. Functions as an intestinal M-cell transcytotic receptor specific of type-I-piliated bacteria that participates in the mucosal immune response toward these bacteria. At the apical membrane of M-cells it binds fimH, a protein of the bacteria type I pilus tip. Internalizes bound bacteria, like E.coli and S.typhimurium, from the lumen of the intestine and delivers them, through M-cells, to the underlying organized lymphoid follicles where they are captured by antigen-presenting dendritic cells to elicit a mucosal immune response. This is Pancreatic secretory granule membrane major glycoprotein GP2 from Rattus norvegicus (Rat).